Here is a 553-residue protein sequence, read N- to C-terminus: ATP synthase F(1) complex subunit alpha, mitochondrial (553 aa).

The transit peptide at 1-43 (MLSVRVAAAVARALPRRAGLVSKNALGSSFVGARNLHASNTRL) directs the protein to the mitochondrion. Serine 53 and serine 65 each carry phosphoserine. Position 76 is a phosphoserine; alternate (serine 76). Serine 76 is a glycosylation site (O-linked (GlcNAc) serine; alternate). Residue serine 106 is modified to Phosphoserine. An N6-acetyllysine mark is found at lysine 123, lysine 126, and lysine 132. The residue at position 134 (threonine 134) is a Phosphothreonine. Residue lysine 161 is modified to N6-acetyllysine; alternate. The residue at position 161 (lysine 161) is an N6-succinyllysine; alternate. Serine 166 is modified (phosphoserine). The residue at position 167 (lysine 167) is an N6-acetyllysine; alternate. Lysine 167 is modified (N6-succinyllysine; alternate). The residue at position 184 (serine 184) is a Phosphoserine. Arginine 204 carries the post-translational modification Omega-N-methylarginine. The ATP site is built by glutamine 215, glycine 217, lysine 218, threonine 219, and serine 220. Threonine 219 serves as a coordination point for Mg(2+). N6-acetyllysine; alternate is present on residues lysine 230 and lysine 239. Lysine 230 and lysine 239 each carry N6-succinyllysine; alternate. An N6-acetyllysine modification is found at lysine 240. An N6-acetyllysine; alternate mark is found at lysine 261 and lysine 305. Lysine 261 and lysine 305 each carry N6-succinyllysine; alternate. Aspartate 312 lines the Mg(2+) pocket. Lysine 427 is subject to N6-acetyllysine; alternate. At lysine 427 the chain carries N6-succinyllysine; alternate. Lysine 434 carries the post-translational modification N6-acetyllysine. The ATP site is built by glutamine 473 and glutamine 475. 2 positions are modified to N6-acetyllysine; alternate: lysine 498 and lysine 506. N6-succinyllysine; alternate occurs at positions 498 and 506. Serine 521 carries the post-translational modification Phosphoserine. An N6-acetyllysine; alternate mark is found at lysine 531 and lysine 539. Residues lysine 531 and lysine 539 each carry the N6-succinyllysine; alternate modification. Position 541 is an N6-acetyllysine (lysine 541).

This sequence belongs to the ATPase alpha/beta chains family. Homotrimer. Component of the ATP synthase complex composed at least of ATP5F1A/subunit alpha, ATP5F1B/subunit beta, ATP5MC1/subunit c (homooctomer), MT-ATP6/subunit a, MT-ATP8/subunit 8, ATP5ME/subunit e, ATP5MF/subunit f, ATP5MG/subunit g, ATP5MK/subunit k, ATP5MJ/subunit j, ATP5F1C/subunit gamma, ATP5F1D/subunit delta, ATP5F1E/subunit epsilon, ATP5PF/subunit F6, ATP5PB/subunit b, ATP5PD/subunit d, ATP5PO/subunit OSCP. ATP synthase complex consists of a soluble F(1) head domain (subunits alpha(3) and beta(3)) - the catalytic core - and a membrane F(0) domain - the membrane proton channel (subunits c, a, 8, e, f, g, k and j). These two domains are linked by a central stalk (subunits gamma, delta, and epsilon) rotating inside the F1 region and a stationary peripheral stalk (subunits F6, b, d, and OSCP). Interacts with ATPAF2. Interacts with HRG; the interaction occurs on the surface of T-cells and alters the cell morphology when associated with concanavalin (in vitro). Interacts with PLG (angiostatin peptide); the interaction inhibits most of the angiogenic properties of angiostatin. Interacts with BLOC1S1. Interacts with BCL2L1 isoform BCL-X(L); the interaction mediates the association of BCL2L1 isoform BCL-X(L) with the mitochondrial membrane F(1)F(0) ATP synthase and enhances neurons metabolic efficiency. Interacts with CLN5 and PPT1. Interacts with S100A1; this interaction increases F1-ATPase activity. Interacts with ABCB7; this interaction allows the regulation of cellular iron homeostasis and cellular reactive oxygen species (ROS) levels in cardiomyocytes. In terms of processing, acetylated on lysine residues. BLOC1S1 is required for acetylation. Acetylation of Lys-132, Lys-230 and Lys-498 is observed in liver mitochondria from fasted mice but not from fed mice.

The protein resides in the mitochondrion inner membrane. Its subcellular location is the cell membrane. Functionally, subunit alpha, of the mitochondrial membrane ATP synthase complex (F(1)F(0) ATP synthase or Complex V) that produces ATP from ADP in the presence of a proton gradient across the membrane which is generated by electron transport complexes of the respiratory chain. ATP synthase complex consist of a soluble F(1) head domain - the catalytic core - and a membrane F(1) domain - the membrane proton channel. These two domains are linked by a central stalk rotating inside the F(1) region and a stationary peripheral stalk. During catalysis, ATP synthesis in the catalytic domain of F(1) is coupled via a rotary mechanism of the central stalk subunits to proton translocation. In vivo, can only synthesize ATP although its ATP hydrolase activity can be activated artificially in vitro. With the catalytic subunit beta (ATP5F1B), forms the catalytic core in the F(1) domain. Subunit alpha does not bear the catalytic high-affinity ATP-binding sites. The polypeptide is ATP synthase F(1) complex subunit alpha, mitochondrial (Mus musculus (Mouse)).